The primary structure comprises 382 residues: MSRFLRPAFRLATTATRASTIRPTPSSLITKAAAVPTTRLLQKRSYAAEATGVKEYTVREALNEALAEELESNPKVFILGEEVAQYNGAYKVTKGLLDRFGEKRVIDTPITEMGFAGLAVGAALAGLQPVCEFMTFNFAMQAIDHIVNSAAKTLYMSGGIQPCNITFRGPNGFAAGVAAQHSQDYAAWYGSIPGLKVVSPWSAEDAKGLLKAAIRDPNPVVVLENELMYGVSFPMSEAAQKDDFVLPFGKAKIERAGKDLTIVSLSRCVGQSLVAAENLKKKYGIEAEVINLRSIKPLDVEAIVKSVKKTHRLLAVESGFPAFGVGAEILALTMEYAFDYLDTPAQRITGADVPTPYAQKLEEMSFPTEQLIEDYAAKMLRV.

Residues 1–46 (MSRFLRPAFRLATTATRASTIRPTPSSLITKAAAVPTTRLLQKRSY) constitute a mitochondrion transit peptide. A thiamine diphosphate-binding site is contributed by glutamate 112. Residues isoleucine 165, alanine 213, isoleucine 214, aspartate 216, and asparagine 218 each coordinate K(+).

In terms of assembly, eukaryotic pyruvate dehydrogenase (PDH) complexes are organized as a core consisting of the oligomeric dihydrolipoamide acetyl-transferase (E2), around which are arranged multiple copies of pyruvate dehydrogenase (E1), dihydrolipoamide dehydrogenase (E3) and protein X (E3BP) bound by non-covalent bonds. The Chaetomium thermophilum PDH complex contains 60 E2 units, 12 E3BP units, about 20 E1 units, and 12 or more E3 units. The units are organized in 1 E2 60-mer, 4 E3BP trimers, about 20 E1 tetramers, and a maximum of 12 E3 dimers. Pyruvate dehydrogenase (E1) is active as a tetramer of 2 alpha and 2 beta subunits. The E3BP trimers are bound inside the icosahedral core with tetrahedral symmetry. Thiamine diphosphate is required as a cofactor.

Its subcellular location is the mitochondrion. It catalyses the reaction N(6)-[(R)-lipoyl]-L-lysyl-[protein] + pyruvate + H(+) = N(6)-[(R)-S(8)-acetyldihydrolipoyl]-L-lysyl-[protein] + CO2. The 10-megadalton pyruvate dehydrogenase complex contains multiple copies of three enzymatic components: pyruvate dehydrogenase (E1), dihydrolipoamide acetyltransferase (E2) and lipoamide dehydrogenase (E3) and catalyzes the overall oxidative decarboxylation of pyruvate to form acetyl-CoA and CO(2). Within the complex, pyruvate and thiamine pyrophosphate (TPP or vitamin B1) are bound by pyruvate dehydrogenase E1 subunits alpha and beta and pyruvate is decarboxylated leading to the 2-carbon hydrohyethyl bound to TPP. The E2 component contains covalently-bound lipoyl cofactors and transfers the hydroxyethyl group from TPP to an oxidized form of covalently bound lipoamide, and the resulting acetyl group is then transferred to free coenzyme A to form acetyl-CoA and reduced dihydrolipoamide-E2. Finally, the flavoprotein dihydrolipoamide dehydrogenase (E3) re-oxidizes the lipoyl group of dihydrolipoamide-E2 to form lipoamide-E2 and NADH. A fourth subunit, E3BP, is responsible for tethering E3 in proximity to the core, forming the entire metabolon. In Chaetomium thermophilum (strain DSM 1495 / CBS 144.50 / IMI 039719) (Thermochaetoides thermophila), this protein is Pyruvate dehydrogenase E1 component subunit beta, mitochondrial.